The primary structure comprises 191 residues: Protein GrpE (191 aa).

Basic and acidic residues predominate over residues 1–11 (MTDSSNAHEAE). Disordered stretches follow at residues 1 to 22 (MTDSSNAHEAENPTVPTPDNEI) and 172 to 191 (KVSKAPAPQGTEAEIENNNE).

It belongs to the GrpE family. Homodimer.

Its subcellular location is the cytoplasm. In terms of biological role, participates actively in the response to hyperosmotic and heat shock by preventing the aggregation of stress-denatured proteins, in association with DnaK and GrpE. It is the nucleotide exchange factor for DnaK and may function as a thermosensor. Unfolded proteins bind initially to DnaJ; upon interaction with the DnaJ-bound protein, DnaK hydrolyzes its bound ATP, resulting in the formation of a stable complex. GrpE releases ADP from DnaK; ATP binding to DnaK triggers the release of the substrate protein, thus completing the reaction cycle. Several rounds of ATP-dependent interactions between DnaJ, DnaK and GrpE are required for fully efficient folding. This is Protein GrpE from Chlamydia abortus (strain DSM 27085 / S26/3) (Chlamydophila abortus).